A 120-amino-acid chain; its full sequence is Large ribosomal subunit protein uL18 (120 aa).

A disordered region spans residues methionine 1–arginine 26. A compositionally biased stretch (basic residues) spans serine 8 to glycine 18.

It belongs to the universal ribosomal protein uL18 family. In terms of assembly, part of the 50S ribosomal subunit; part of the 5S rRNA/L5/L18/L25 subcomplex. Contacts the 5S and 23S rRNAs.

This is one of the proteins that bind and probably mediate the attachment of the 5S RNA into the large ribosomal subunit, where it forms part of the central protuberance. The sequence is that of Large ribosomal subunit protein uL18 from Trichormus variabilis (strain ATCC 29413 / PCC 7937) (Anabaena variabilis).